The primary structure comprises 759 residues: TSK-associating protein 1 (759 aa).

Residues 1–29 form the signal peptide; sequence MEIYTMKTNFLVLALSLCILLSSFHEVSC. The segment at 55-74 is disordered; that stretch reads GKDDEDQSAKIQSENQNNTT. Polar residues predominate over residues 63–74; it reads AKIQSENQNNTT. 10 EFE repeat repeats span residues 91–138, 139–176, 177–215, 216–254, 255–293, 294–329, 330–368, 369–407, 408–443, and 444–473; these read VGSV…DEEL, SAHR…DEEH, SAKR…DEEH, SAKR…DEEQ, SAKR…EEEH, AAKG…DKEH, FTAA…DDEQ, SAKR…NEEQ, SAKR…LEEE, and SAKR…DKEE. A 10 X approximate EFE repeat region spans residues 91-473; the sequence is VGSVSDESVG…GINAKADKEE (383 aa). Coiled coils occupy residues 142–461 and 685–734; these read RQKM…FEEA and IKKL…AKDE. Disordered regions lie at residues 154–184, 200–219, 271–332, and 393–414; these read EAAS…QSLL, QLKV…SAKR, AASK…HFTA, and LKAN…RKSM.

In terms of assembly, homomultimer. Interacts (via C-terminal domain) with GIP1, CSN1 (via N-terminal domain) and TSK (via TPR repeats). Binds calcium through the EFE repeats. In terms of tissue distribution, expressed preferentially in flowers and shoot apex.

Its subcellular location is the endoplasmic reticulum lumen. It is found in the nucleus envelope. It localises to the cytoplasm. Its function is as follows. Involved in seedling development in the dark. May be involved, when interacting with TSK, in the organization of spindle microtubules and may participate, when interacting with GIP1, in structural links between the nuclear envelope and the cytoskeleton. In Arabidopsis thaliana (Mouse-ear cress), this protein is TSK-associating protein 1 (TSA1).